The primary structure comprises 1286 residues: Ankyrin-repeat and fibronectin type III domain-containing 1 (1286 aa).

ANK repeat units lie at residues Gln-274–Leu-303 and Glu-311–Pro-340. In terms of domain architecture, Fibronectin type-III spans Val-411–Ser-507. Positions Gly-748–Lys-755 are highly conserved peptide sequence. Over residues Ser-999 to Ser-1011 the composition is skewed to polar residues. 4 disordered regions span residues Ser-999–Cys-1032, Lys-1086–His-1106, Ala-1187–Pro-1207, and Ala-1242–Leu-1286. Over residues Ser-1260 to Pro-1277 the composition is skewed to low complexity.

As to expression, expressed in both the suprachiasmatic nucleus and dorsal medial hypothalamus.

Its function is as follows. May play a role in neuronal function. The sequence is that of Ankyrin-repeat and fibronectin type III domain-containing 1 from Mus musculus (Mouse).